The following is a 537-amino-acid chain: Lysine--tRNA ligase (537 aa).

The short motif at 30 to 38 (PSGNIHIGN) is the 'HIGH' region element. The 'KMSKS' region motif lies at 276–280 (AMSSS).

Belongs to the class-I aminoacyl-tRNA synthetase family.

Its subcellular location is the cytoplasm. The enzyme catalyses tRNA(Lys) + L-lysine + ATP = L-lysyl-tRNA(Lys) + AMP + diphosphate. This chain is Lysine--tRNA ligase, found in Methanosarcina barkeri (strain Fusaro / DSM 804).